The chain runs to 176 residues: Pituitary adenylate cyclase-activating polypeptide (176 aa).

Positions 1 to 24 are cleaved as a signal peptide; it reads MTMCSGARLALLVYGILMHSSVYG. A propeptide spanning residues 25–80 is cleaved from the precursor; it reads SPAASGLRFPGIRPENEVYDEDGNPQQDFYDSESLGVGSPASALRDAYALYYPAEE. A disordered region spans residues 98–135; sequence QPSARRSPADAHGQGLGWDPGGSADDDSEPLSKRHSDG. Positions 150-158 are important for receptor binding; the sequence is VKKYLAAVL. Leu158 is subject to Leucine amide. Residue Lys169 is modified to Lysine amide. A propeptide spanning residues 173–176 is cleaved from the precursor; that stretch reads IPYL.

It belongs to the glucagon family. Interacts with ADCYAP1R1 (via N-terminal extracellular domain); both PACAP27 and PACAP38 neuropeptides function as ligand for the ADCYAP1R1 receptor, which modulates the activity of downstream effectors. Interacts with VIPR1 and VIPR2; functions as ligand for VIPR1 and VIPR2 receptors, which modulate the activity of downstream effectors.

It localises to the secreted. Functionally, PACAP is a neuropeptide involved in diverse array of physiological processes through activating the PACAP subfamily of class B1 G protein-coupled receptors: VIP receptor 1 (VIPR1), VIP receptor 2 (VIPR2), and PACAP type I receptor (ADCYAP1R1). Exerts neuroprotective and general cytoprotective effects due to anti-apoptotic, anti-inflammatory, and antioxidant actions. Promotes neuron projection development through the RAPGEF2/Rap1/B-Raf/ERK pathway. In chromaffin cells, induces long-lasting increase of intracellular calcium concentrations and neuroendocrine secretion. Involved in the control of glucose homeostasis, induces insulin secretion by pancreatic beta cells. PACAP exists in two bioactive forms from proteolysis of the same precursor protein, PACAP27 and PACAP38, which differ by eleven amino acid residues in the C-terminus. The chain is Pituitary adenylate cyclase-activating polypeptide (ADCYAP1) from Bos taurus (Bovine).